Here is a 218-residue protein sequence, read N- to C-terminus: Uracil-DNA glycosylase (218 aa).

D59 acts as the Proton acceptor in catalysis.

This sequence belongs to the uracil-DNA glycosylase (UDG) superfamily. UNG family.

The protein localises to the cytoplasm. The enzyme catalyses Hydrolyzes single-stranded DNA or mismatched double-stranded DNA and polynucleotides, releasing free uracil.. Excises uracil residues from the DNA which can arise as a result of misincorporation of dUMP residues by DNA polymerase or due to deamination of cytosine. The sequence is that of Uracil-DNA glycosylase from Staphylococcus aureus (strain MSSA476).